The chain runs to 206 residues: Translation machinery-associated protein 22 (206 aa).

Residues valine 98–leucine 169 enclose the SUI1 domain. The tract at residues serine 184–lysine 206 is disordered. Over residues asparagine 196–lysine 206 the composition is skewed to low complexity.

The protein belongs to the DENR family. In terms of assembly, interacts with the 40S ribosomal subunit.

It localises to the cytoplasm. In Vanderwaltozyma polyspora (strain ATCC 22028 / DSM 70294 / BCRC 21397 / CBS 2163 / NBRC 10782 / NRRL Y-8283 / UCD 57-17) (Kluyveromyces polysporus), this protein is Translation machinery-associated protein 22 (TMA22).